We begin with the raw amino-acid sequence, 765 residues long: ATP-dependent RNA helicase DBP4 (765 aa).

Residues 1 to 14 show a composition bias toward basic residues; it reads MAKPRRNNKNKKGQ. A disordered region spans residues 1 to 24; the sequence is MAKPRRNNKNKKGQSRSQAREKEE. Positions 47 to 75 match the Q motif motif; the sequence is SQFSDLPITQETLRGLNESSFMSLTDIQK. The 175-residue stretch at 78–252 folds into the Helicase ATP-binding domain; the sequence is IPIALKGEDL…RLSLTNPKRI (175 aa). 91-98 contributes to the ATP binding site; that stretch reads ARTGSGKT. Residues 200 to 203 carry the DEAD box motif; it reads DEAD. The Helicase C-terminal domain occupies 266 to 438; it reads SLDQYYIRIP…SIRPQLQSLC (173 aa). 3 disordered regions span residues 493 to 526, 552 to 576, and 641 to 735; these read KGGS…NEAS, NGSQ…RKDH, and KEQK…DKHN. Over residues 558-568 the composition is skewed to acidic residues; sequence EDEDEEEEDDF. 2 stretches are compositionally biased toward basic and acidic residues: residues 641-653 and 678-688; these read KEQK…RETE and KEVEKRMRDEE.

It belongs to the DEAD box helicase family. DDX10/DBP4 subfamily. Interacts with the U3 and U14 snoRNAs. Associates with pre-ribosomal complexes.

It is found in the nucleus. The protein resides in the nucleolus. It carries out the reaction ATP + H2O = ADP + phosphate + H(+). Functionally, ATP-dependent RNA helicase required for ribosome biogenesis. Involved in the release of U14 snoRNA in pre-ribosomal complexes. Required for pre-rRNA cleavage at site A2. The sequence is that of ATP-dependent RNA helicase DBP4 (DBP4) from Scheffersomyces stipitis (strain ATCC 58785 / CBS 6054 / NBRC 10063 / NRRL Y-11545) (Yeast).